Reading from the N-terminus, the 702-residue chain is SAGA complex subunit NGG1 (702 aa).

Residues 1–10 show a composition bias toward basic residues; that stretch reads MPRHGRRGKL. 2 disordered regions span residues 1 to 29 and 90 to 224; these read MPRH…PSKL and LRKI…VKNP. Composition is skewed to basic and acidic residues over residues 11–22 and 90–108; these read PKGEKLPKKEGG and LRKI…EKQE. The span at 109–125 shows a compositional bias: polar residues; it reads TSNADGQHESSTATEET. Ser134 carries the post-translational modification Phosphoserine. The segment covering 162 to 219 has biased composition (basic and acidic residues); that stretch reads MAKEEINEDKDLQVHRDQPREKRPFDSETENRATENENTQRPDNKKQKIDVDKMENDP. Phosphoserine is present on Ser407. Residue Thr464 is modified to Phosphothreonine. A Nuclear localization signal motif is present at residues 606–618; it reads KRIRVPKKRKKHH. Disordered stretches follow at residues 611-636 and 672-702; these read PKKR…IAQQ and NESV…VELN. Positions 620-636 are enriched in polar residues; the sequence is AASNNVNTGTTSQIAQQ. Positions 680–689 are enriched in acidic residues; the sequence is DQEEDEDEAD.

The protein belongs to the NGG1 family. In terms of assembly, component of the 1.8 MDa SAGA (Spt-Ada-Gcn5 acetyltransferase) complex, which is composed of 19 subunits TRA1, SPT7, TAF5, NGG1/ADA3, SGF73, SPT20/ADA5, SPT8, TAF12, TAF6, HFI1/ADA1, UBP8, GCN5, ADA2, SPT3, SGF29, TAF10, TAF9, SGF11 and SUS1. The SAGA complex is composed of 4 modules, namely the HAT (histone acetyltransferase) module (GCN5, ADA2, NGG1/ADA3 and SGF29), the DUB (deubiquitinating) module (UBP8, SGF11, SGF73 and SUS1), the core or TAF (TBP-associated factor) module (TAF5, TAF6, TAF9, TAF10 and TAF12), and the Tra1 or SPT (Suppressor of Ty) module (TRA1, HFI1/ADA1, SPT3, SPT7, SPT8 and SPT20/ADA5). The Tra1/SPT module binds activators, the core module recruits TBP (TATA-binding protein), the HAT module contains the histone H3 acetyltransferase GCN5, and the DUB module comprises the histone H2B deubiquitinase UBP8. Also identified in an altered form of SAGA, named SALSA (SAGA altered, Spt8 absent) or SLIK (SAGA-like) complex, which contains a C-terminal truncated form of SPT7 and is missing SPT8. However, it has been shown that the SAGA and SAGA-like SALSA/SLIK transcriptional coactivators are structurally and biochemically equivalent. Component of the 0.8 MDa ADA complex, a HAT complex distinct from SAGA, which at least consists of ADA2, NGG1/ADA3, AHC1, AHC2, SGF29 and GCN5. Identified in an Ada.spt complex with SPT7 and TRA1. Component of an ADA/GCN5 complex that consists of HFI1/ADA1, ADA2, NGG1/ADA3, SPT20/ADA5 and GCN5 and probably is a subcomplex of SAGA.

It is found in the nucleus. In terms of biological role, component of the transcription coactivator SAGA complex. SAGA acts as a general cofactor required for essentially all RNA polymerase II transcription. At the promoters, SAGA is required for transcription pre-initiation complex (PIC) recruitment. It influences RNA polymerase II transcriptional activity through different activities such as TBP interaction (via core/TAF module) and promoter selectivity, interaction with transcription activators (via Tra1/SPT module), and chromatin modification through histone acetylation (via HAT module) and deubiquitination (via DUB module). SAGA preferentially acetylates histones H3 (to form H3K9ac, H3K14ac, H3K18ac and H3K23ac) and H2B and deubiquitinates histone H2B. SAGA interacts with DNA via upstream activating sequences (UASs). Also identified in a modified version of SAGA named SALSA or SLIK. The cleavage of SPT7 and the absence of the SPT8 subunit in SLIK neither drive any major conformational differences in its structure compared with SAGA, nor significantly affect HAT, DUB, or DNA-binding activities. Component of the ADA histone acetyltransferase complex, which preferentially acetylates nucleosomal histones H3 (to form H3K14ac and H3K18ac) and H2B. May be involved in response to DNA damage by genotoxic agents. The polypeptide is SAGA complex subunit NGG1 (NGG1) (Saccharomyces cerevisiae (strain ATCC 204508 / S288c) (Baker's yeast)).